The following is a 345-amino-acid chain: D-fructose 1,6-bisphosphatase class 2/sedoheptulose 1,7-bisphosphatase (345 aa).

Residues aspartate 33, glutamate 57, aspartate 97, and glutamate 100 each contribute to the Mn(2+) site. Residues 100–102 (EGT), tyrosine 131, 176–178 (RPR), and 198–200 (DGD) contribute to the substrate site. Glutamate 225 is a Mn(2+) binding site.

Belongs to the FBPase class 2 family. Homotetramer. The cofactor is Mn(2+).

It catalyses the reaction beta-D-fructose 1,6-bisphosphate + H2O = beta-D-fructose 6-phosphate + phosphate. The enzyme catalyses D-sedoheptulose 1,7-bisphosphate + H2O = D-sedoheptulose 7-phosphate + phosphate. The protein operates within carbohydrate biosynthesis; Calvin cycle. Functionally, catalyzes the hydrolysis of fructose 1,6-bisphosphate (Fru 1,6-P2) and sedoheptulose 1,7-bisphosphate (Sed 1,7-P2) to fructose 6-phosphate and sedoheptulose 7-phosphate, respectively. This Trichodesmium erythraeum (strain IMS101) protein is D-fructose 1,6-bisphosphatase class 2/sedoheptulose 1,7-bisphosphatase.